A 127-amino-acid chain; its full sequence is Small ribosomal subunit protein uS11 (127 aa).

The protein belongs to the universal ribosomal protein uS11 family. As to quaternary structure, part of the 30S ribosomal subunit.

In terms of biological role, located on the platform of the 30S subunit. This chain is Small ribosomal subunit protein uS11, found in Natronomonas pharaonis (strain ATCC 35678 / DSM 2160 / CIP 103997 / JCM 8858 / NBRC 14720 / NCIMB 2260 / Gabara) (Halobacterium pharaonis).